A 189-amino-acid chain; its full sequence is Elongation factor P (189 aa).

The protein belongs to the elongation factor P family.

The protein resides in the cytoplasm. Its pathway is protein biosynthesis; polypeptide chain elongation. In terms of biological role, involved in peptide bond synthesis. Stimulates efficient translation and peptide-bond synthesis on native or reconstituted 70S ribosomes in vitro. Probably functions indirectly by altering the affinity of the ribosome for aminoacyl-tRNA, thus increasing their reactivity as acceptors for peptidyl transferase. This chain is Elongation factor P, found in Pseudomonas fluorescens (strain Pf0-1).